Consider the following 307-residue polypeptide: Taste receptor type 2 member 106 (307 aa).

The Extracellular portion of the chain corresponds to 1 to 7; sequence MLTIPEG. The chain crosses the membrane as a helical span at residues 8-28; that stretch reads ILLCFITSGSVLGVLGNGFIL. Residues 29-41 lie on the Cytoplasmic side of the membrane; sequence HVNCTDCVRQKFS. Residues 42 to 62 traverse the membrane as a helical segment; the sequence is TTGFIFTGLAISRICVICIII. The Extracellular portion of the chain corresponds to 63-81; the sequence is SDGYLKLFSPHMVASDAHI. A helical transmembrane segment spans residues 82 to 104; the sequence is IGISYLWIITNHTSTCFATILNL. At 105 to 124 the chain is on the cytoplasmic side; it reads FYFLKIANFSHYIFFCLKRK. The chain crosses the membrane as a helical span at residues 125-145; the sequence is LNTIFIFLLGCLFISWSVAFP. The Extracellular segment spans residues 146-179; it reads QTVKIFNDKMKHRNTSWKFHLHKSKFIINHILLN. The N-linked (GlcNAc...) asparagine glycan is linked to N159. A helical transmembrane segment spans residues 180–200; that stretch reads LGVIFFCMVAIITSFLLIISL. The Cytoplasmic portion of the chain corresponds to 201–227; it reads WKHNRKMQLYVSRFKSLNTEVHLKVMK. The chain crosses the membrane as a helical span at residues 228–248; that stretch reads VLISFIILLILHVIGILIETL. The Extracellular segment spans residues 249 to 257; sequence SFLRYENKL. A helical membrane pass occupies residues 258–278; it reads LLILGLNFSSMYPCCHSFILI. The Cytoplasmic portion of the chain corresponds to 279-307; that stretch reads LANNQLKQASLKALKQFKCHKKDKDVRET.

It belongs to the G-protein coupled receptor T2R family.

The protein resides in the membrane. Its function is as follows. Putative taste receptor which may play a role in the perception of bitterness. The sequence is that of Taste receptor type 2 member 106 from Rattus norvegicus (Rat).